The chain runs to 375 residues: Succinyl-diaminopimelate desuccinylase (375 aa).

Histidine 66 lines the Zn(2+) pocket. Aspartate 68 is a catalytic residue. Aspartate 99 provides a ligand contact to Zn(2+). The active-site Proton acceptor is glutamate 133. Zn(2+)-binding residues include glutamate 134, glutamate 162, and histidine 348.

Belongs to the peptidase M20A family. DapE subfamily. In terms of assembly, homodimer. Zn(2+) is required as a cofactor. Requires Co(2+) as cofactor.

The catalysed reaction is N-succinyl-(2S,6S)-2,6-diaminopimelate + H2O = (2S,6S)-2,6-diaminopimelate + succinate. The protein operates within amino-acid biosynthesis; L-lysine biosynthesis via DAP pathway; LL-2,6-diaminopimelate from (S)-tetrahydrodipicolinate (succinylase route): step 3/3. Functionally, catalyzes the hydrolysis of N-succinyl-L,L-diaminopimelic acid (SDAP), forming succinate and LL-2,6-diaminopimelate (DAP), an intermediate involved in the bacterial biosynthesis of lysine and meso-diaminopimelic acid, an essential component of bacterial cell walls. The protein is Succinyl-diaminopimelate desuccinylase of Escherichia coli O6:K15:H31 (strain 536 / UPEC).